We begin with the raw amino-acid sequence, 200 residues long: RNA polymerase I-specific transcription initiation factor rrn11 (200 aa).

It localises to the nucleus. In terms of biological role, subunit of a multiprotein complex essential for the initiation of rDNA transcription by RNA polymerase I. Binding to the DNA template is dependent on the initial binding of other factors. The sequence is that of RNA polymerase I-specific transcription initiation factor rrn11 (rrn11) from Schizosaccharomyces pombe (strain 972 / ATCC 24843) (Fission yeast).